A 510-amino-acid polypeptide reads, in one-letter code: Alpha-L-arabinofuranosidase B (510 aa).

Residues 1 to 24 (MTMSRSSRSSVLALALATGSLVAA) form the signal peptide. Positions 25 to 342 (GPCDIYSSGG…ADIVAAKYAT (318 aa)) are catalytic. Cystine bridges form between C27–C37, C87–C92, and C182–C183. N89 is a glycosylation site (N-linked (GlcNAc...) asparagine). D225 is a substrate binding site. E227 serves as the catalytic Nucleophile. Substrate-binding residues include N228 and G303. D304 acts as the Proton donor in catalysis. Residues 343–510 (TSLISGPALT…VSWVVADGFA (168 aa)) form an ABD region. C412 and C450 form a disulfide bridge. Substrate-binding residues include H427, N429, F430, D446, H475, E477, L480, and D500.

It belongs to the glycosyl hydrolase 54 family.

It is found in the secreted. The enzyme catalyses Hydrolysis of terminal non-reducing alpha-L-arabinofuranoside residues in alpha-L-arabinosides.. Its pathway is glycan metabolism; L-arabinan degradation. Its function is as follows. Alpha-L-arabinofuranosidase involved in the degradation of arabinoxylan, a major component of plant hemicellulose. Able to hydrolyze 1,5-, 1,3- and 1,2-alpha-linkages not only in L-arabinofuranosyl oligosaccharides, but also in polysaccharides containing terminal non-reducing L-arabinofuranoses in side chains, like L-arabinan, arabinogalactan and arabinoxylan. The protein is Alpha-L-arabinofuranosidase B (abfB) of Emericella nidulans (strain FGSC A4 / ATCC 38163 / CBS 112.46 / NRRL 194 / M139) (Aspergillus nidulans).